The chain runs to 341 residues: C2 calcium-dependent domain-containing protein 4D (341 aa).

The segment covering 56–71 (RLRDPRGAEGRVDRNP) has biased composition (basic and acidic residues). Disordered regions lie at residues 56-75 (RLRD…GGRN) and 134-176 (CRAP…PYAP). A compositionally biased stretch (low complexity) spans 139–149 (SDTASSPDSSP). In terms of domain architecture, C2 spans 205-331 (RGGQLRLSTE…PPLAGGLGPG (127 aa)).

This Mus musculus (Mouse) protein is C2 calcium-dependent domain-containing protein 4D (C2cd4d).